A 421-amino-acid polypeptide reads, in one-letter code: Outer capsid protein P8 (421 aa).

Belongs to the phytoreovirus outer capsid protein P8 family. In terms of assembly, homotrimer. Homomultimer. Interacts with host peroxisomal glycolate oxidase (GOX). This interaction mediates its relocation to virus factories peripheral to host peroxisomes.

Its subcellular location is the virion. It is found in the host cytoplasm. Its function is as follows. Capsid protein which self-assembles to form the outer icosahedral capsid with a T=13 symmetry, about 70 nm in diameter and consisting of 780 molecules capsid proteins. This Rice dwarf virus (isolate S) (RDV) protein is Outer capsid protein P8 (S8).